A 96-amino-acid chain; its full sequence is Large ribosomal subunit protein uL23 (96 aa).

The protein belongs to the universal ribosomal protein uL23 family. As to quaternary structure, part of the 50S ribosomal subunit. Contacts protein L29, and trigger factor when it is bound to the ribosome.

In terms of biological role, one of the early assembly proteins it binds 23S rRNA. One of the proteins that surrounds the polypeptide exit tunnel on the outside of the ribosome. Forms the main docking site for trigger factor binding to the ribosome. The polypeptide is Large ribosomal subunit protein uL23 (Bacillus mycoides (strain KBAB4) (Bacillus weihenstephanensis)).